Consider the following 1117-residue polypeptide: Telomerase reverse transcriptase (1117 aa).

The TEN stretch occupies residues 1–191 (MQKINNINNN…VKQKKWYKNN (191 aa)). Residues 217-519 (NQYIYPEIQR…ENLEKVEEKL (303 aa)) are RBD. Residues 517 to 881 (EKLIPEDSFQ…NECQWIGKSI (365 aa)) form the Reverse transcriptase domain. An RT region spans residues 520–887 (IPEDSFQKYP…GKSIDMNTLE (368 aa)). Residue Asp-618 participates in Mg(2+) binding. Residues 638–742 (SDLIQDTYFI…NQDKPRCITK (105 aa)) form a TRAP region. Residues Asp-815 and Asp-816 each coordinate Mg(2+). The tract at residues 888–1117 (IKSIQKQTQQ…SAKSNQQNTN (230 aa)) is CTE.

This sequence belongs to the reverse transcriptase family. Telomerase subfamily. In terms of assembly, component of the telomerase holoenzyme complex, composed of the catalytic core (the catalytic subunit TERT, the telomerase RNA template component TER and TAP65/p65), which is associated with two heterotrimeric subcomplexes: (i) the replication protein A (RPA)-related subcomplex, composed of TEB1, RPA2/TEB2 and RPA3/TEB3 and (ii) the CST-like subcomplex, composed of TAP75/p75, TAP45/p45 and TAP19/p19. TEB1 and the CST-like subcomplex are tethered to the catalytic core by TAP50/p50.

Its subcellular location is the nucleus. It localises to the chromosome. The protein localises to the telomere. It catalyses the reaction DNA(n) + a 2'-deoxyribonucleoside 5'-triphosphate = DNA(n+1) + diphosphate. Functionally, catalytic component of telomerase, an essential ribonucleoprotein enzyme that copies new telomeric repeats onto chromosome ends by repetitively synthesizing the short telomere-repeat sequence 5'-TTGGGG-3' using an RNA template component TER. TERT is a reverse transcriptase that adds simple sequence repeats to chromosome ends by copying a template sequence within the RNA component of the enzyme. In Tetrahymena thermophila (strain SB210), this protein is Telomerase reverse transcriptase.